Here is a 572-residue protein sequence, read N- to C-terminus: Proline--tRNA ligase (572 aa).

Belongs to the class-II aminoacyl-tRNA synthetase family. ProS type 1 subfamily. Homodimer.

Its subcellular location is the cytoplasm. It catalyses the reaction tRNA(Pro) + L-proline + ATP = L-prolyl-tRNA(Pro) + AMP + diphosphate. Catalyzes the attachment of proline to tRNA(Pro) in a two-step reaction: proline is first activated by ATP to form Pro-AMP and then transferred to the acceptor end of tRNA(Pro). As ProRS can inadvertently accommodate and process non-cognate amino acids such as alanine and cysteine, to avoid such errors it has two additional distinct editing activities against alanine. One activity is designated as 'pretransfer' editing and involves the tRNA(Pro)-independent hydrolysis of activated Ala-AMP. The other activity is designated 'posttransfer' editing and involves deacylation of mischarged Ala-tRNA(Pro). The misacylated Cys-tRNA(Pro) is not edited by ProRS. The protein is Proline--tRNA ligase of Alteromonas mediterranea (strain DSM 17117 / CIP 110805 / LMG 28347 / Deep ecotype).